The sequence spans 70 residues: Brevinin-1CG3 (70 aa).

The N-terminal stretch at 1 to 22 is a signal peptide; sequence MFTLKKSLLLLFFLGTINLSLC. Residues 23-44 constitute a propeptide, removed in mature form; it reads EQERNAEEERRDDSDKRDVEVE. A disulfide bond links Cys64 and Cys70.

Belongs to the frog skin active peptide (FSAP) family. Brevinin subfamily. As to expression, expressed by the skin glands.

Its subcellular location is the secreted. Its function is as follows. Antimicrobial peptide active against a variety of Gram-positive and some Gram-negative bacterial strains. Has antifungal activity against a slime mold isolate. Has hemolytic activity against human erythrocytes. This Amolops chunganensis (Chungan torrent frog) protein is Brevinin-1CG3.